Consider the following 456-residue polypeptide: tRNA-2-methylthio-N(6)-dimethylallyladenosine synthase (456 aa).

The MTTase N-terminal domain maps to 3–120 (KKVYVKTFGC…LPQMIDQRRA (118 aa)). Positions 12, 49, 83, 157, 161, and 164 each coordinate [4Fe-4S] cluster. Residues 143-377 (RIDGPSAFVS…QATIEENVQR (235 aa)) form the Radical SAM core domain. In terms of domain architecture, TRAM spans 380 to 447 (QAMVGKVERI…PHSLRGELVM (68 aa)).

Belongs to the methylthiotransferase family. MiaB subfamily. As to quaternary structure, monomer. [4Fe-4S] cluster serves as cofactor.

The protein resides in the cytoplasm. It catalyses the reaction N(6)-dimethylallyladenosine(37) in tRNA + (sulfur carrier)-SH + AH2 + 2 S-adenosyl-L-methionine = 2-methylsulfanyl-N(6)-dimethylallyladenosine(37) in tRNA + (sulfur carrier)-H + 5'-deoxyadenosine + L-methionine + A + S-adenosyl-L-homocysteine + 2 H(+). Catalyzes the methylthiolation of N6-(dimethylallyl)adenosine (i(6)A), leading to the formation of 2-methylthio-N6-(dimethylallyl)adenosine (ms(2)i(6)A) at position 37 in tRNAs that read codons beginning with uridine. This Paraburkholderia phymatum (strain DSM 17167 / CIP 108236 / LMG 21445 / STM815) (Burkholderia phymatum) protein is tRNA-2-methylthio-N(6)-dimethylallyladenosine synthase.